Reading from the N-terminus, the 760-residue chain is Xaa-Pro dipeptidyl-peptidase (760 aa).

Active-site charge relay system residues include Ser-349, Asp-469, and His-499.

This sequence belongs to the peptidase S15 family. Homodimer.

Its subcellular location is the cytoplasm. The catalysed reaction is Hydrolyzes Xaa-Pro-|- bonds to release unblocked, N-terminal dipeptides from substrates including Ala-Pro-|-p-nitroanilide and (sequentially) Tyr-Pro-|-Phe-Pro-|-Gly-Pro-|-Ile.. Functionally, removes N-terminal dipeptides sequentially from polypeptides having unsubstituted N-termini provided that the penultimate residue is proline. This chain is Xaa-Pro dipeptidyl-peptidase, found in Streptococcus pyogenes serotype M5 (strain Manfredo).